The primary structure comprises 494 residues: UPF0371 protein M28_Spy1076 (494 aa).

It belongs to the UPF0371 family.

The polypeptide is UPF0371 protein M28_Spy1076 (Streptococcus pyogenes serotype M28 (strain MGAS6180)).